We begin with the raw amino-acid sequence, 325 residues long: Hydroxymethylglutaryl-CoA lyase, mitochondrial (325 aa).

Residues Met1–Gly27 constitute a mitochondrion transit peptide. A Pyruvate carboxyltransferase domain is found at Val33–Leu300. Arg41 provides a ligand contact to substrate. An a divalent metal cation-binding site is contributed by Asp42. An N6-acetyllysine; alternate modification is found at Lys48. Lys48 bears the N6-succinyllysine; alternate mark. Residue Lys111 is modified to N6-acetyllysine. Lys137 and Lys179 each carry N6-acetyllysine; alternate. Residues Lys137 and Lys179 each carry the N6-succinyllysine; alternate modification. Residues His233 and His235 each coordinate a divalent metal cation. The active site involves Cys266. Asn275 is an a divalent metal cation binding site. A Microbody targeting signal motif is present at residues Cys323–Leu325. An N6-acetyllysine modification is found at Lys324.

This sequence belongs to the HMG-CoA lyase family. As to quaternary structure, homodimer; disulfide-linked. Can also form homotetramers. The cofactor is a divalent metal cation. As to expression, highest expression in liver. Expressed in pancreas, kidney, intestine, testis, fibroblasts and lymphoblasts. Very low expression in brain and skeletal muscle. The relative expression of isoform 2 (at mRNA level) is highest in heart (30%), skeletal muscle (22%), and brain (14%).

The protein resides in the mitochondrion matrix. The protein localises to the peroxisome. It carries out the reaction (3S)-3-hydroxy-3-methylglutaryl-CoA = acetoacetate + acetyl-CoA. It functions in the pathway metabolic intermediate metabolism; (S)-3-hydroxy-3-methylglutaryl-CoA degradation; acetoacetate from (S)-3-hydroxy-3-methylglutaryl-CoA: step 1/1. Its activity is regulated as follows. Stimulated by reducing agents such as dithiothreitol (DTT). Mitochondrial 3-hydroxy-3-methylglutaryl-CoA lyase that catalyzes a cation-dependent cleavage of (S)-3-hydroxy-3-methylglutaryl-CoA into acetyl-CoA and acetoacetate, a key step in ketogenesis. Terminal step in leucine catabolism. Ketone bodies (beta-hydroxybutyrate, acetoacetate and acetone) are essential as an alternative source of energy to glucose, as lipid precursors and as regulators of metabolism. The chain is Hydroxymethylglutaryl-CoA lyase, mitochondrial (HMGCL) from Homo sapiens (Human).